Here is a 433-residue protein sequence, read N- to C-terminus: Serine hydroxymethyltransferase (433 aa).

Residue 121–123 (AHV) coordinates (6S)-5,6,7,8-tetrahydrofolate. N6-(pyridoxal phosphate)lysine is present on Lys-227. Position 243 (Glu-243) interacts with (6S)-5,6,7,8-tetrahydrofolate.

The protein belongs to the SHMT family. As to quaternary structure, homodimer. Pyridoxal 5'-phosphate serves as cofactor.

It is found in the cytoplasm. Its pathway is amino-acid biosynthesis; glycine biosynthesis; glycine from L-serine: step 1/1. Catalyzes the reversible interconversion of serine and glycine with a modified folate serving as the one-carbon carrier. Also exhibits a pteridine-independent aldolase activity toward beta-hydroxyamino acids, producing glycine and aldehydes, via a retro-aldol mechanism. The sequence is that of Serine hydroxymethyltransferase from Saccharolobus islandicus (strain M.14.25 / Kamchatka #1) (Sulfolobus islandicus).